The sequence spans 656 residues: Threonine--tRNA ligase (656 aa).

The TGS domain maps to 2 to 67 (LMSQITIILP…KDQTKVALVT (66 aa)). Positions 251 to 542 (DHRKLGKELG…YLEHTAGHLP (292 aa)) are catalytic. Cys-342, His-393, and His-519 together coordinate Zn(2+).

This sequence belongs to the class-II aminoacyl-tRNA synthetase family. As to quaternary structure, homodimer. Zn(2+) is required as a cofactor.

The protein resides in the cytoplasm. It carries out the reaction tRNA(Thr) + L-threonine + ATP = L-threonyl-tRNA(Thr) + AMP + diphosphate + H(+). Catalyzes the attachment of threonine to tRNA(Thr) in a two-step reaction: L-threonine is first activated by ATP to form Thr-AMP and then transferred to the acceptor end of tRNA(Thr). Also edits incorrectly charged L-seryl-tRNA(Thr). In Bdellovibrio bacteriovorus (strain ATCC 15356 / DSM 50701 / NCIMB 9529 / HD100), this protein is Threonine--tRNA ligase.